Consider the following 155-residue polypeptide: MRCPFCGNIDTQVKDSRPAEDHVSIRRRRFCPACGGRFTTYERVQLRDLVVIKSTGKREDFDRDKLERSIRISMQKRPIDPERIDQMISGIVRRLESMGETDIGSKQIGEIVMEALARIDTVAYVRFASVYKNFQAADDFDKFVSELRPDVPGDE.

The segment at 3–34 is a zinc-finger region; it reads CPFCGNIDTQVKDSRPAEDHVSIRRRRFCPAC. One can recognise an ATP-cone domain in the interval 49 to 139; that stretch reads LVVIKSTGKR…VYKNFQAADD (91 aa).

This sequence belongs to the NrdR family. It depends on Zn(2+) as a cofactor.

In terms of biological role, negatively regulates transcription of bacterial ribonucleotide reductase nrd genes and operons by binding to NrdR-boxes. This chain is Transcriptional repressor NrdR, found in Roseobacter denitrificans (strain ATCC 33942 / OCh 114) (Erythrobacter sp. (strain OCh 114)).